Reading from the N-terminus, the 319-residue chain is Acetyl-coenzyme A carboxylase carboxyl transferase subunit beta (319 aa).

In terms of domain architecture, CoA carboxyltransferase N-terminal spans 24 to 293 (LWIKCPDTGQ…MIEQEPEPSA (270 aa)). The interval 282–319 (PEMIEQEPEPSAPVPPDEPDEPAATQEAPPAAPAAPPA) is disordered.

The protein belongs to the AccD/PCCB family. Acetyl-CoA carboxylase is a heterohexamer composed of biotin carboxyl carrier protein (AccB), biotin carboxylase (AccC) and two subunits each of ACCase subunit alpha (AccA) and ACCase subunit beta (AccD).

It is found in the cytoplasm. It catalyses the reaction N(6)-carboxybiotinyl-L-lysyl-[protein] + acetyl-CoA = N(6)-biotinyl-L-lysyl-[protein] + malonyl-CoA. The protein operates within lipid metabolism; malonyl-CoA biosynthesis; malonyl-CoA from acetyl-CoA: step 1/1. Functionally, component of the acetyl coenzyme A carboxylase (ACC) complex. Biotin carboxylase (BC) catalyzes the carboxylation of biotin on its carrier protein (BCCP) and then the CO(2) group is transferred by the transcarboxylase to acetyl-CoA to form malonyl-CoA. This chain is Acetyl-coenzyme A carboxylase carboxyl transferase subunit beta, found in Nitrobacter winogradskyi (strain ATCC 25391 / DSM 10237 / CIP 104748 / NCIMB 11846 / Nb-255).